The following is a 251-amino-acid chain: MVEDSQDTTHFGFQTVAKEQKADMVAQVFHSVAAKYDVMNDLMSFGIHRLWKRFTIDCSGVRRGQKVLDLAGGTGDLTAKFSRLVGESGKVVLADINDSMLKMGREKLRNIGIVGNVEYVQANAEALPFPDNTFDCITISFGLRNVTDKEKALRSMFRVLKPGGRLLVLEFSKPVFEPLNKAYDAYSFHILPRVGELVAKDAGSYRYLAESIRMHPDQETLKAMMNDAGFENVNYYNMTGGIVALHRGYKF.

S-adenosyl-L-methionine contacts are provided by residues Thr-74, Asp-95, 123 to 124 (NA), and Ser-140.

The protein belongs to the class I-like SAM-binding methyltransferase superfamily. MenG/UbiE family.

It catalyses the reaction a 2-demethylmenaquinol + S-adenosyl-L-methionine = a menaquinol + S-adenosyl-L-homocysteine + H(+). The enzyme catalyses a 2-methoxy-6-(all-trans-polyprenyl)benzene-1,4-diol + S-adenosyl-L-methionine = a 5-methoxy-2-methyl-3-(all-trans-polyprenyl)benzene-1,4-diol + S-adenosyl-L-homocysteine + H(+). It participates in quinol/quinone metabolism; menaquinone biosynthesis; menaquinol from 1,4-dihydroxy-2-naphthoate: step 2/2. It functions in the pathway cofactor biosynthesis; ubiquinone biosynthesis. In terms of biological role, methyltransferase required for the conversion of demethylmenaquinol (DMKH2) to menaquinol (MKH2) and the conversion of 2-polyprenyl-6-methoxy-1,4-benzoquinol (DDMQH2) to 2-polyprenyl-3-methyl-6-methoxy-1,4-benzoquinol (DMQH2). This Cronobacter sakazakii (strain ATCC BAA-894) (Enterobacter sakazakii) protein is Ubiquinone/menaquinone biosynthesis C-methyltransferase UbiE.